A 362-amino-acid chain; its full sequence is Putative membrane-bound acyltransferase YfiQ (362 aa).

A run of 10 helical transmembrane segments spans residues 11–31, 44–64, 82–102, 119–139, 153–173, 181–201, 220–240, 252–267, 283–303, and 308–328; these read CISC…MLQA, FRTL…FLLA, VIFV…TSAM, VFLG…YMLH, WVLS…SAAS, GGAF…FCLA, WVVY…SYVG, IMLY…FHLF, YSFS…VLLL, and IPAV…PIMT.

This sequence belongs to the acyltransferase 3 family.

The protein localises to the cell membrane. This is Putative membrane-bound acyltransferase YfiQ (yfiQ) from Bacillus subtilis (strain 168).